The chain runs to 250 residues: MSFPYFISPEQAMRERSELARKGIARGRSVVALAYADGVLFVAENPSRSLQKVSELYDRVGFAAVGRFNEFNNLRSGGIRFADTQGYAYSRRDVTGRQLANVYAQTLGTIFTEQAKPYEVELCVAEVAHFGESKAPELYRITYDGSIADEPHFVVMGGATEPIIAKLNDSYTENAELADAVRIAVDALESGGNGAERRTLGPSTLEVAILDANRPRRAFRRITGSALEALLPQRDAEASADAGAADKPAE.

The protein belongs to the peptidase T1A family. In terms of assembly, the 20S proteasome core is composed of 14 alpha and 14 beta subunits that assemble into four stacked heptameric rings, resulting in a barrel-shaped structure. The two inner rings, each composed of seven catalytic beta subunits, are sandwiched by two outer rings, each composed of seven alpha subunits. The catalytic chamber with the active sites is on the inside of the barrel. Has a gated structure, the ends of the cylinder being occluded by the N-termini of the alpha-subunits. Is capped by the proteasome-associated ATPase, ARC.

Its subcellular location is the cytoplasm. It participates in protein degradation; proteasomal Pup-dependent pathway. The formation of the proteasomal ATPase ARC-20S proteasome complex, likely via the docking of the C-termini of ARC into the intersubunit pockets in the alpha-rings, may trigger opening of the gate for substrate entry. Interconversion between the open-gate and close-gate conformations leads to a dynamic regulation of the 20S proteasome proteolysis activity. In terms of biological role, component of the proteasome core, a large protease complex with broad specificity involved in protein degradation. This Mycobacterium sp. (strain JLS) protein is Proteasome subunit alpha.